A 166-amino-acid chain; its full sequence is MSETQIAPLTLNIQYTKDLSFEVPGAPAIYTLLRQAPTVNINLDVQVQRLQDDAHVYEVTLTTRAEATHPAPAESGNGAEGGKDLTVFIADLSYAGVFTLTGIPDNQIEPVLLVECPRLLFPFARNILADVTRDGGFPPVMLGPVDFVGLWQARRAQDDGETIANA.

This sequence belongs to the SecB family. In terms of assembly, homotetramer, a dimer of dimers. One homotetramer interacts with 1 SecA dimer.

The protein resides in the cytoplasm. One of the proteins required for the normal export of preproteins out of the cell cytoplasm. It is a molecular chaperone that binds to a subset of precursor proteins, maintaining them in a translocation-competent state. It also specifically binds to its receptor SecA. The chain is Protein-export protein SecB from Acidiphilium cryptum (strain JF-5).